Consider the following 144-residue polypeptide: Ribosomal RNA large subunit methyltransferase H (144 aa).

Residues Leu68, Gly96, and 112-117 (FSKLTF) contribute to the S-adenosyl-L-methionine site.

Belongs to the RNA methyltransferase RlmH family. As to quaternary structure, homodimer.

It localises to the cytoplasm. It carries out the reaction pseudouridine(1915) in 23S rRNA + S-adenosyl-L-methionine = N(3)-methylpseudouridine(1915) in 23S rRNA + S-adenosyl-L-homocysteine + H(+). Functionally, specifically methylates the pseudouridine at position 1915 (m3Psi1915) in 23S rRNA. The protein is Ribosomal RNA large subunit methyltransferase H of Mycoplasmopsis synoviae (strain 53) (Mycoplasma synoviae).